We begin with the raw amino-acid sequence, 193 residues long: Orotate phosphoribosyltransferase (193 aa).

Residues Arg-102, Lys-103, Lys-106, His-108, and 129–137 each bind 5-phospho-alpha-D-ribose 1-diphosphate; that span reads EDVVTTGGS. The orotate site is built by Thr-133 and Arg-161.

The protein belongs to the purine/pyrimidine phosphoribosyltransferase family. PyrE subfamily. Homodimer. Mg(2+) serves as cofactor.

It carries out the reaction orotidine 5'-phosphate + diphosphate = orotate + 5-phospho-alpha-D-ribose 1-diphosphate. It participates in pyrimidine metabolism; UMP biosynthesis via de novo pathway; UMP from orotate: step 1/2. Catalyzes the transfer of a ribosyl phosphate group from 5-phosphoribose 1-diphosphate to orotate, leading to the formation of orotidine monophosphate (OMP). The chain is Orotate phosphoribosyltransferase from Prochlorococcus marinus (strain NATL1A).